A 444-amino-acid polypeptide reads, in one-letter code: Zeaxanthin 4-ketolase (444 aa).

The interval 408 to 444 is disordered; sequence VAGGSSSGGGGEGGKPGAGEHGLLQRQRQLAPVGVMA. Positions 412–427 are enriched in gly residues; that stretch reads SSSGGGGEGGKPGAGE.

It catalyses the reaction all-trans-adonixanthin + 2 AH2 + 2 O2 = all-trans-(3S,3'S)-astaxanthin + 2 A + 3 H2O. It carries out the reaction all-trans-zeaxanthin + 2 AH2 + 2 O2 = all-trans-adonixanthin + 2 A + 3 H2O. The enzyme catalyses echinenone + 2 AH2 + 2 O2 = canthaxanthin + 2 A + 3 H2O. The catalysed reaction is all-trans-beta-carotene + 2 AH2 + 2 O2 = echinenone + 2 A + 3 H2O. It functions in the pathway carotenoid biosynthesis; astaxanthin biosynthesis. Its function is as follows. Involved in the biosynthesis of ketocarotenoids which are powerful anti-oxidative molecules. Catalyzes the conversion of zeaxanthin to astaxanthin via adonixanthin. Catalyzes the conversion of beta-carotene to canthaxanthin via echinenone. The protein is Zeaxanthin 4-ketolase of Chlamydomonas reinhardtii (Chlamydomonas smithii).